We begin with the raw amino-acid sequence, 119 residues long: Large ribosomal subunit protein bL20 (119 aa).

It belongs to the bacterial ribosomal protein bL20 family.

In terms of biological role, binds directly to 23S ribosomal RNA and is necessary for the in vitro assembly process of the 50S ribosomal subunit. It is not involved in the protein synthesizing functions of that subunit. The chain is Large ribosomal subunit protein bL20 from Gluconacetobacter diazotrophicus (strain ATCC 49037 / DSM 5601 / CCUG 37298 / CIP 103539 / LMG 7603 / PAl5).